A 123-amino-acid polypeptide reads, in one-letter code: MIKGIGTDIVEIERIKKAIESNPNFINRFFTEKEIEYFKLRKFNANTISGNFAAKEAVSKALGSGFRGFGLMDIEVLRDELGKPIVNLSDKLYKMFNLDNYNIFISISHSNTDAIAYAIIEVI.

Residues D8 and E56 each coordinate Mg(2+).

The protein belongs to the P-Pant transferase superfamily. AcpS family. Mg(2+) serves as cofactor.

The protein resides in the cytoplasm. The enzyme catalyses apo-[ACP] + CoA = holo-[ACP] + adenosine 3',5'-bisphosphate + H(+). In terms of biological role, transfers the 4'-phosphopantetheine moiety from coenzyme A to a Ser of acyl-carrier-protein. The polypeptide is Holo-[acyl-carrier-protein] synthase (Clostridium botulinum (strain Alaska E43 / Type E3)).